Consider the following 686-residue polypeptide: Protein MxiA (686 aa).

Transmembrane regions (helical) follow at residues 28 to 52, 105 to 129, 197 to 216, 232 to 256, 274 to 292, and 299 to 315; these read LIIP…ILVF, FVIG…FIVI, AIAG…SVGM, ILTI…GFIV, IFGN…LAIG, and FFVF…LFYY.

It belongs to the FHIPEP (flagella/HR/invasion proteins export pore) family.

It localises to the cell inner membrane. Necessary for the secretion of IPA invasins. This chain is Protein MxiA (mxiA), found in Shigella flexneri.